Reading from the N-terminus, the 452-residue chain is Matrilin-3 (452 aa).

Residues 1–24 (MRRALGTLGCCLALLLPLLPAARG) form the signal peptide. Residues 54-229 (DLVFIIDSSR…GVIEKLTSKF (176 aa)) enclose the VWFA domain. EGF-like domains lie at 235–275 (AANT…RTCS), 276–316 (AVDV…KTCS), 317–357 (AMDV…KTCS), and 358–398 (AVDV…KTCS). Disulfide bonds link C239–C250, C246–C259, C261–C274, C280–C291, C287–C300, C302–C315, C321–C332, C328–C341, C343–C356, C362–C373, C369–C382, and C384–C397. N295 is a glycosylation site (N-linked (GlcNAc...) asparagine). Residues 419–451 (ALQDSVTSRLEALSTKLDEVSQKLQAYQDRQQV) are a coiled coil.

In terms of assembly, can form homooligomers (monomers, dimers, trimers and tetramers) and heterooligomers with matrilin-1. In terms of tissue distribution, expression is restricted to cartilaginous tissues.

Its subcellular location is the secreted. Its function is as follows. Major component of the extracellular matrix of cartilage and may play a role in the formation of extracellular filamentous networks. This is Matrilin-3 (MATN3) from Gallus gallus (Chicken).